A 319-amino-acid polypeptide reads, in one-letter code: DNA-directed RNA polymerases IV and V subunit 3B (319 aa).

M1 carries the N-acetylmethionine modification.

The protein belongs to the archaeal Rpo3/eukaryotic RPB3 RNA polymerase subunit family. As to quaternary structure, component of the RNA polymerase IV and V complexes. Interacts with NRPB11, SHH1, GRP23 and NRPD1.

The protein localises to the nucleus. Its function is as follows. DNA-dependent RNA polymerase catalyzes the transcription of DNA into RNA using the four ribonucleoside triphosphates as substrates. Component of RNA polymerases IV and V which mediate short-interfering RNAs (siRNA) accumulation and subsequent RNA-directed DNA methylation-dependent (RdDM) transcriptional gene silencing (TGS) of endogenous repeated sequences, including transposable elements. This chain is DNA-directed RNA polymerases IV and V subunit 3B (NRPD3B), found in Arabidopsis thaliana (Mouse-ear cress).